The primary structure comprises 257 residues: Tryptophan synthase alpha chain (257 aa).

Residues Glu-46 and Asp-57 each act as proton acceptor in the active site.

This sequence belongs to the TrpA family. As to quaternary structure, tetramer of two alpha and two beta chains.

It catalyses the reaction (1S,2R)-1-C-(indol-3-yl)glycerol 3-phosphate + L-serine = D-glyceraldehyde 3-phosphate + L-tryptophan + H2O. Its pathway is amino-acid biosynthesis; L-tryptophan biosynthesis; L-tryptophan from chorismate: step 5/5. The alpha subunit is responsible for the aldol cleavage of indoleglycerol phosphate to indole and glyceraldehyde 3-phosphate. The chain is Tryptophan synthase alpha chain from Parabacteroides distasonis (strain ATCC 8503 / DSM 20701 / CIP 104284 / JCM 5825 / NCTC 11152).